Here is a 739-residue protein sequence, read N- to C-terminus: Xylosyl- and glucuronyltransferase LARGE2s (739 aa).

At methionine 1–lysine 10 the chain is on the cytoplasmic side. The helical; Signal-anchor for type II membrane protein transmembrane segment at leucine 11–serine 31 threads the bilayer. Residues leucine 32 to leucine 739 lie on the Lumenal side of the membrane. Residues alanine 80 to asparagine 105 are disordered. Asparagine 105, asparagine 131, and asparagine 217 each carry an N-linked (GlcNAc...) asparagine glycan. The xylosyltransferase activity stretch occupies residues leucine 121–arginine 396. Mn(2+) is bound by residues aspartate 225 and aspartate 227. Residue asparagine 255 is glycosylated (N-linked (GlcNAc...) asparagine). Positions arginine 397 to leucine 739 are glucuronyltransferase activity. Residues aspartate 546 and aspartate 548 each contribute to the Mn(2+) site.

In the C-terminal section; belongs to the glycosyltransferase 49 family. It in the N-terminal section; belongs to the glycosyltransferase 8 family. Mn(2+) is required as a cofactor.

The protein resides in the golgi apparatus membrane. The enzyme catalyses 3-O-[beta-D-GlcA-(1-&gt;3)-beta-D-Xyl-(1-&gt;4)-Rib-ol-P-Rib-ol-P-3-beta-D-GalNAc-(1-&gt;3)-beta-D-GlcNAc-(1-&gt;4)-(O-6-P-alpha-D-Man)]-Thr-[protein] + UDP-alpha-D-xylose = 3-O-[alpha-D-Xyl-(1-&gt;3)-beta-D-GlcA-(1-&gt;4)-beta-D-Xyl-(1-&gt;4)-Rib-ol-P-Rib-ol-P-3-beta-D-GalNAc-(1-&gt;3)-beta-D-GlcNAc-(1-&gt;4)-(O-6-P-alpha-D-Man)]-Thr-[protein] + UDP + H(+). It carries out the reaction 3-O-{(1-&gt;[3)-alpha-D-Xyl-(1-&gt;3)-beta-D-GlcA-(1-&gt;](n)-4)-beta-D-Xyl-(1-&gt;4)-Rib-ol-P-Rib-ol-P-3-beta-D-GalNAc-(1-&gt;3)-beta-D-GlcNAc-(1-&gt;4)-O-6-P-alpha-D-Man}-L-Thr-[protein] + UDP-alpha-D-glucuronate = 3-O-{beta-D-GlcA-(1-&gt;[3)-alpha-D-Xyl-(1-&gt;3)-beta-D-GlcA-(1-&gt;](n)-4)-beta-D-Xyl-(1-&gt;4)-Rib-ol-P-Rib-ol-P-3-beta-D-GalNAc-(1-&gt;3)-beta-D-GlcNAc-(1-&gt;4)-O-6-P-alpha-D-Man}-L-Thr-[protein] + UDP + H(+). The catalysed reaction is 3-O-{beta-D-GlcA-(1-&gt;[3)-alpha-D-Xyl-(1-&gt;3)-beta-D-GlcA-(1-&gt;](n)-4)-beta-D-Xyl-(1-&gt;4)-Rib-ol-P-Rib-ol-P-3-beta-D-GalNAc-(1-&gt;3)-beta-D-GlcNAc-(1-&gt;4)-O-6-P-alpha-D-Man}-L-Thr-[protein] + UDP-alpha-D-xylose = 3-O-{(1-&gt;[3)-alpha-D-Xyl-(1-&gt;3)-beta-D-GlcA-(1-&gt;](n+1)-4)-beta-D-Xyl-(1-&gt;4)-Rib-ol-P-Rib-ol-P-3-beta-D-GalNAc-(1-&gt;3)-beta-D-GlcNAc-(1-&gt;4)-O-6-P-alpha-D-Man}-L-Thr-[protein] + UDP + H(+). It participates in protein modification; protein glycosylation. Its function is as follows. Bifunctional glycosyltransferase with both alpha-1,3-xylosyltransferase and beta-1,3-glucuronyltransferase activities involved in the maturation of alpha-dystroglycan (DAG1) by glycosylation leading to DAG1 binding to laminin G-like domain-containing extracellular proteins with high affinity and in a phosphorylated-O-mannosyl trisaccharide dependent manner. Elongates the glucuronyl-beta-1,4-xylose-beta disaccharide primer structure by adding repeating units [-3-Xylose-alpha-1,3-GlcA-beta-1-] to produce a heteropolysaccharide. Supports the maturation of DAG1 more effectively than LARGE1. In addition, can modify both heparan sulfate (HS)- and chondroitin/dermatan sulfate (CS/DS)-proteoglycans (PGs), namely GPC4, with a glycosaminoglycan (GAG)-like polysaccharide composed of xylose and glucuronic acid to confer laminin binding. This is Xylosyl- and glucuronyltransferase LARGE2s from Gallus gallus (Chicken).